A 501-amino-acid chain; its full sequence is GMP synthase [glutamine-hydrolyzing] (501 aa).

The region spanning 1-185 is the Glutamine amidotransferase type-1 domain; sequence MVLVVDYGSQ…LFNVCKLEKN (185 aa). C75 acts as the Nucleophile in catalysis. Residues H159 and E161 contribute to the active site. Residues 186–376 enclose the GMPS ATP-PPase domain; it reads WKIGDLVEEK…LGIPDRIINR (191 aa). 213–219 contacts ATP; the sequence is SGGVDSS.

In terms of assembly, homodimer.

The catalysed reaction is XMP + L-glutamine + ATP + H2O = GMP + L-glutamate + AMP + diphosphate + 2 H(+). It participates in purine metabolism; GMP biosynthesis; GMP from XMP (L-Gln route): step 1/1. Catalyzes the synthesis of GMP from XMP. The polypeptide is GMP synthase [glutamine-hydrolyzing] (Thermotoga petrophila (strain ATCC BAA-488 / DSM 13995 / JCM 10881 / RKU-1)).